Reading from the N-terminus, the 612-residue chain is Cytokine-like nuclear factor N-PAC (612 aa).

Positions 22-81 (PKDLIWAKMKGFTPWPGMIVEPPLDLLTQQRRANTKCVFFFGSRNFAWIEENNIKPFEGP) constitute a PWWP domain. Positions 168 to 270 (AVEGENNADS…GASSSSPTAR (103 aa)) are disordered. 2 stretches are compositionally biased toward low complexity: residues 177–193 (SSAS…TAKS) and 201–220 (AKPV…TTKS). Residues 228-240 (AHQTPTGANTSGL) are compositionally biased toward polar residues. The segment at 276–279 (DDLL) is interaction with histone H3. Residues 319 to 612 (RDIVPSELTF…SSAVFVRSRF (294 aa)) are dehydrogenase domain. NAD(+) contacts are provided by residues 329-343 (GFLG…IVKD), Thr421, and Arg564.

It belongs to the HIBADH-related family. NP60 subfamily. As to quaternary structure, binds to mononucleosomes. Interacts with male-specific lethal (MSL) histone acetyltransferase complex at least composed of mof, msl-1, msl-2 and msl-3.

The protein resides in the chromosome. Functionally, nucleosome-destabilizing factor that is recruited to genes during transcriptional activation and colocalizes with a subset of trimethylated 'Lys-36' histone H3 (H3K36me3)-enriched regions. Binds DNA (in vitro). Facilitates Pol II transcription through nucleosomes. Facilitates male-specific lethal (MSL) histone acetyltransferase complex targeting to active genes on the X chromosome. Stimulates the acetylation of 'Lys-56' of nucleosomal histone H3 (H3K56ac) by nej. This Drosophila pseudoobscura pseudoobscura (Fruit fly) protein is Cytokine-like nuclear factor N-PAC.